The sequence spans 156 residues: Ribosomal RNA large subunit methyltransferase H (156 aa).

Residues leucine 73, glycine 104, and 123–128 (LSPLTL) contribute to the S-adenosyl-L-methionine site.

This sequence belongs to the RNA methyltransferase RlmH family. In terms of assembly, homodimer.

It is found in the cytoplasm. It carries out the reaction pseudouridine(1915) in 23S rRNA + S-adenosyl-L-methionine = N(3)-methylpseudouridine(1915) in 23S rRNA + S-adenosyl-L-homocysteine + H(+). Functionally, specifically methylates the pseudouridine at position 1915 (m3Psi1915) in 23S rRNA. This Pectobacterium carotovorum subsp. carotovorum (strain PC1) protein is Ribosomal RNA large subunit methyltransferase H.